The chain runs to 102 residues: Small ribosomal subunit protein uS10 (102 aa).

The protein belongs to the universal ribosomal protein uS10 family. In terms of assembly, part of the 30S ribosomal subunit.

Involved in the binding of tRNA to the ribosomes. This chain is Small ribosomal subunit protein uS10, found in Streptococcus thermophilus (strain CNRZ 1066).